Here is a 382-residue protein sequence, read N- to C-terminus: ATP phosphoribosyltransferase regulatory subunit (382 aa).

The protein belongs to the class-II aminoacyl-tRNA synthetase family. HisZ subfamily. Heteromultimer composed of HisG and HisZ subunits.

It is found in the cytoplasm. It participates in amino-acid biosynthesis; L-histidine biosynthesis; L-histidine from 5-phospho-alpha-D-ribose 1-diphosphate: step 1/9. Its function is as follows. Required for the first step of histidine biosynthesis. May allow the feedback regulation of ATP phosphoribosyltransferase activity by histidine. The protein is ATP phosphoribosyltransferase regulatory subunit of Acidovorax sp. (strain JS42).